The following is a 405-amino-acid chain: Glucan 1,3-beta-glucosidase A (405 aa).

Residues 1-14 (MLPLLLCIVPYCWS) form the signal peptide. The Proton donor role is filled by E199. Disulfide bonds link C280–C405 and C306–C332. The Nucleophile role is filled by E298.

Belongs to the glycosyl hydrolase 5 (cellulase A) family. Monomer. Mn(2+) is required as a cofactor.

It is found in the secreted. It catalyses the reaction Successive hydrolysis of beta-D-glucose units from the non-reducing ends of (1-&gt;3)-beta-D-glucans, releasing alpha-glucose.. In terms of biological role, beta-glucanases participate in the metabolism of beta-glucan, the main structural component of the cell wall. It could also function biosynthetically as a transglycosylase. The protein is Glucan 1,3-beta-glucosidase A (exgA) of Aspergillus oryzae (strain ATCC 42149 / RIB 40) (Yellow koji mold).